Here is a 567-residue protein sequence, read N- to C-terminus: Arginine--tRNA ligase (567 aa).

Positions 128–138 match the 'HIGH' region motif; sequence ANPTGPLHVGH.

This sequence belongs to the class-I aminoacyl-tRNA synthetase family. As to quaternary structure, monomer.

Its subcellular location is the cytoplasm. It catalyses the reaction tRNA(Arg) + L-arginine + ATP = L-arginyl-tRNA(Arg) + AMP + diphosphate. This Acidovorax ebreus (strain TPSY) (Diaphorobacter sp. (strain TPSY)) protein is Arginine--tRNA ligase.